Reading from the N-terminus, the 122-residue chain is Anti-sigma-F factor antagonist RsfB (122 aa).

An STAS domain is found at 7–115 (ITVTVADHNG…STLHDALTGV (109 aa)). S61 bears the Phosphoserine mark.

It belongs to the anti-sigma-factor antagonist family. Interacts with anti-sigma-F factor RsbW (UsfX). Its phosphorylation may prevent this interaction. Putative phosphorylation on Ser-61 may prevent interaction with RsbW.

Functionally, positive regulator of sigma-F (SigF) activity. Binds to anti-sigma-F factor RsbW (UsfX) preventing its binding to SigF, thus activating transcription. This chain is Anti-sigma-F factor antagonist RsfB (rsfB), found in Mycobacterium tuberculosis (strain CDC 1551 / Oshkosh).